The following is an 868-amino-acid chain: DNA mismatch repair protein MutS (868 aa).

Position 620-627 (620-627) interacts with ATP; that stretch reads GPNMSGKS.

Belongs to the DNA mismatch repair MutS family.

In terms of biological role, this protein is involved in the repair of mismatches in DNA. It is possible that it carries out the mismatch recognition step. This protein has a weak ATPase activity. The chain is DNA mismatch repair protein MutS from Flavobacterium johnsoniae (strain ATCC 17061 / DSM 2064 / JCM 8514 / BCRC 14874 / CCUG 350202 / NBRC 14942 / NCIMB 11054 / UW101) (Cytophaga johnsonae).